The following is a 368-amino-acid chain: Decarboxylase yanB (368 aa).

Zn(2+) contacts are provided by His7, His9, and His159. Asn169 carries N-linked (GlcNAc...) asparagine glycosylation. Residue Asp283 participates in Zn(2+) binding. A helical transmembrane segment spans residues 339 to 359; sequence WGAFSACLLLPVGLSALYSVL.

Belongs to the metallo-dependent hydrolases superfamily. ACMSD family.

Its subcellular location is the membrane. It carries out the reaction 6-methylsalicylate + H(+) = 3-methylphenol + CO2. It participates in secondary metabolite biosynthesis; terpenoid biosynthesis. Decarboxylase; part of the gene cluster that mediates the biosynthesis of yanuthone D, a fungal isoprenoid epoxycyclohexenone that acts as an antibiotic against fungi and bacteria. The first step of the pathway is the synthesis of 6-methylsalicylic acid (6-MSA) by the polyketide synthase yanA. 6-MSA is then converted to m-cresol by the decarboxylase yanB. The cytochrome P450 monooxygenase yanC then catalyzes the oxidation of m-cresol to toluquinol. Epoxidation of toluquinol is then performed by the short chain dehydrogenase yanD, with the help of yanE, and a further prenylation by yanG leads to 7-deacetoxyyanuthone A. The next step is the hydroxylation of C-22 of 7-deacetoxyyanuthone A by the cytochrome P450 monooxygenase yanH to yield 22-deacetylyanuthone A. O-Mevalon transferase yanI then attaches mevalon to the hydroxyl group of 22-deacetylyanuthone A to produce yanuthone E. Finally, the FAD-dependent monooxygenase yanF oxidizes the hydroxyl group at C15 of yanuthone E to form yanuthone D. Furthermore, several branching points in the pathway lead to the production of yanuthones F and G from 7-deacetoxyyanuthone A; yanuthones H and I from 22-deacetylyanuthone A; and yanuthone J from yanuthone E. In Aspergillus niger (strain ATCC 1015 / CBS 113.46 / FGSC A1144 / LSHB Ac4 / NCTC 3858a / NRRL 328 / USDA 3528.7), this protein is Decarboxylase yanB.